The following is a 552-amino-acid chain: Esterase E4 (552 aa).

Positions 1–23 are cleaved as a signal peptide; that stretch reads MKNTCGILLNLFLFIGCFLTCSA. Asn81 carries an N-linked (GlcNAc...) asparagine glycan. Cys89 and Cys106 are disulfide-bonded. Residue Ser214 is the Acyl-ester intermediate of the active site. Cys266 and Cys277 are disulfide-bonded. An N-linked (GlcNAc...) asparagine glycan is attached at Asn269. Catalysis depends on Glu339, which acts as the Charge relay system. N-linked (GlcNAc...) asparagine glycosylation is found at Asn371, Asn404, and Asn443. Residue His463 is the Charge relay system of the active site.

Belongs to the type-B carboxylesterase/lipase family.

The catalysed reaction is a carboxylic ester + H2O = an alcohol + a carboxylate + H(+). Functionally, overproduction of nonspecific esterases is a common mechanism of resistance to organophosphate insecticides. This Myzus persicae (Green peach aphid) protein is Esterase E4.